The chain runs to 219 residues: ATP phosphoribosyltransferase (219 aa).

The protein belongs to the ATP phosphoribosyltransferase family. Short subfamily. Heteromultimer composed of HisG and HisZ subunits.

The protein resides in the cytoplasm. It catalyses the reaction 1-(5-phospho-beta-D-ribosyl)-ATP + diphosphate = 5-phospho-alpha-D-ribose 1-diphosphate + ATP. It functions in the pathway amino-acid biosynthesis; L-histidine biosynthesis; L-histidine from 5-phospho-alpha-D-ribose 1-diphosphate: step 1/9. In terms of biological role, catalyzes the condensation of ATP and 5-phosphoribose 1-diphosphate to form N'-(5'-phosphoribosyl)-ATP (PR-ATP). Has a crucial role in the pathway because the rate of histidine biosynthesis seems to be controlled primarily by regulation of HisG enzymatic activity. The chain is ATP phosphoribosyltransferase from Paramagnetospirillum magneticum (strain ATCC 700264 / AMB-1) (Magnetospirillum magneticum).